A 318-amino-acid chain; its full sequence is Mitochondrial coenzyme A transporter SLC25A42 (318 aa).

3 Solcar repeats span residues 31 to 117, 129 to 214, and 224 to 312; these read RQVL…YKRI, LPPW…LKSL, and PYPF…MQIL. Transmembrane regions (helical) follow at residues 33 to 53, 89 to 109, 135 to 155, 186 to 206, 230 to 250, and 293 to 313; these read VLSS…AVAP, LWRG…IQFS, LLAG…LDLV, LYFG…LSFF, MVFG…LDVV, and LKGP…QILL.

Belongs to the mitochondrial carrier (TC 2.A.29) family. Widely expressed. Highly expressed in adipose, followed by hypothalamus and brain coronal sections containing corpus callosum, fornix, thalamus, hypothalamus, optic chiasm, pons, midbrain, and cerebellum.

It is found in the mitochondrion inner membrane. It carries out the reaction ADP(out) + CoA(in) = ADP(in) + CoA(out). It catalyses the reaction 3'-dephospho-CoA(in) + ADP(out) = 3'-dephospho-CoA(out) + ADP(in). The enzyme catalyses adenosine 3',5'-bisphosphate(in) + ADP(out) = adenosine 3',5'-bisphosphate(out) + ADP(in). The catalysed reaction is AMP(in) + ADP(out) = AMP(out) + ADP(in). It carries out the reaction dADP(in) + ADP(out) = dADP(out) + ADP(in). It catalyses the reaction ADP(in) + ATP(out) = ADP(out) + ATP(in). In terms of biological role, mitochondrial carrier mediating the transport of coenzyme A (CoA) in mitochondria in exchange for intramitochondrial (deoxy)adenine nucleotides and adenosine 3',5'-diphosphate. The chain is Mitochondrial coenzyme A transporter SLC25A42 (Slc25a42) from Rattus norvegicus (Rat).